We begin with the raw amino-acid sequence, 210 residues long: MMNYEDAKLRGQAVAILYQIGAIKFGKHILASGEETPLYVDMRLVISSPEVLQTVATLIWRLRPSFNSSLLCGVPYTALTLATSISLKYNIPMVLRRKELQNVDPSDAIKVEGLFTPGQTCLVINDMVSSGKSIIETAVALEENGLVVREALVFLDRRKEACQPLGPQGIKVSSVFTVPTLIKALIAYGKLSSGDLTLANKISEILEIES.

Residues Arg97, Lys98, and 125–133 (NDMVSSGKS) each bind 5-phospho-alpha-D-ribose 1-diphosphate. Positions 129 and 157 each coordinate orotate.

It belongs to the purine/pyrimidine phosphoribosyltransferase family. PyrE subfamily. Homodimer. Mg(2+) is required as a cofactor.

The catalysed reaction is orotidine 5'-phosphate + diphosphate = orotate + 5-phospho-alpha-D-ribose 1-diphosphate. The protein operates within pyrimidine metabolism; UMP biosynthesis via de novo pathway; UMP from orotate: step 1/2. Functionally, catalyzes the transfer of a ribosyl phosphate group from 5-phosphoribose 1-diphosphate to orotate, leading to the formation of orotidine monophosphate (OMP). This Chlamydia pneumoniae (Chlamydophila pneumoniae) protein is Orotate phosphoribosyltransferase.